We begin with the raw amino-acid sequence, 322 residues long: Breast cancer metastasis-suppressor 1-like protein (322 aa).

The span at 1-16 shows a compositional bias: basic and acidic residues; it reads MPVHSREKKESNHNDM. Residues 1 to 56 form a disordered region; sequence MPVHSREKKESNHNDMEVDYPENEGSSSEEDDSDSSSGSEEGDSSEMDDEDCERRR. Over residues 17-51 the composition is skewed to acidic residues; that stretch reads EVDYPENEGSSSEEDDSDSSSGSEEGDSSEMDDED. Coiled coils occupy residues 50 to 99 and 147 to 178; these read EDCE…QAQE and EKLLLYDTVQSELEEKIRRLEEDRHSIDITSE.

This sequence belongs to the BRMS1 family.

The protein resides in the nucleus. In terms of biological role, involved in the histone deacetylase (HDAC1)-dependent transcriptional repression activity. This Xenopus laevis (African clawed frog) protein is Breast cancer metastasis-suppressor 1-like protein (brms1l).